An 87-amino-acid chain; its full sequence is Mitochondrial import inner membrane translocase subunit TIM8 (87 aa).

The short motif at C44 to C68 is the Twin CX3C motif element. Disulfide bonds link C44–C68 and C48–C64.

Belongs to the small Tim family. Heterohexamer; composed of 3 copies of TIM8 and 3 copies of TIM13, named soluble 70 kDa complex. Associates with the TIM22 complex, whose core is composed of TIM18, TIM22 and TIM54. Interacts with the transmembrane regions of multi-pass transmembrane proteins in transit.

The protein localises to the mitochondrion inner membrane. It is found in the mitochondrion intermembrane space. Mitochondrial intermembrane chaperone that participates in the import and insertion of some multi-pass transmembrane proteins into the mitochondrial inner membrane. Also required for the transfer of beta-barrel precursors from the TOM complex to the sorting and assembly machinery (SAM complex) of the outer membrane. Acts as a chaperone-like protein that protects the hydrophobic precursors from aggregation and guide them through the mitochondrial intermembrane space. The TIM8-TIM13 complex is non essential and only mediates the import of few proteins under precise conditions, while the predominant TIM9-TIM10 70 kDa complex is crucial and mediates the import of much more proteins. Strictly required for import of TIM23 in some conditions, when a low membrane potential exists in the mitochondria. This chain is Mitochondrial import inner membrane translocase subunit TIM8 (TIM8), found in Saccharomyces cerevisiae (strain ATCC 204508 / S288c) (Baker's yeast).